The primary structure comprises 149 residues: Large ribosomal subunit protein bL9 (149 aa).

The protein belongs to the bacterial ribosomal protein bL9 family.

In terms of biological role, binds to the 23S rRNA. The sequence is that of Large ribosomal subunit protein bL9 from Xanthomonas campestris pv. campestris (strain 8004).